We begin with the raw amino-acid sequence, 262 residues long: Type III pantothenate kinase (262 aa).

ATP is bound at residue 9 to 16; it reads DIGNTNVK. Residues Tyr-103 and 110 to 113 each bind substrate; that span reads GADR. The Proton acceptor role is filled by Asp-112. Asp-134 contacts K(+). Thr-137 is a binding site for ATP. Thr-190 serves as a coordination point for substrate.

This sequence belongs to the type III pantothenate kinase family. As to quaternary structure, homodimer. The cofactor is NH4(+). K(+) serves as cofactor.

It is found in the cytoplasm. The enzyme catalyses (R)-pantothenate + ATP = (R)-4'-phosphopantothenate + ADP + H(+). It participates in cofactor biosynthesis; coenzyme A biosynthesis; CoA from (R)-pantothenate: step 1/5. In terms of biological role, catalyzes the phosphorylation of pantothenate (Pan), the first step in CoA biosynthesis. The sequence is that of Type III pantothenate kinase from Nitratidesulfovibrio vulgaris (strain DSM 19637 / Miyazaki F) (Desulfovibrio vulgaris).